The sequence spans 405 residues: Metallophosphoesterase 1 (405 aa).

The helical transmembrane segment at 31–51 (IFGSILLVFFFCEFLVYYLVI) threads the bilayer. Residues D78, D120, N158, H261, H315, and H317 each coordinate a divalent metal cation. A helical transmembrane segment spans residues 369–389 (IIYIYCTASVLLTGYVLACLW).

It belongs to the metallophosphoesterase superfamily. MPPE1 family. Mn(2+) serves as cofactor.

Its subcellular location is the endoplasmic reticulum-Golgi intermediate compartment membrane. In terms of biological role, metallophosphoesterase that catalyzes the removal of a side-chain ethanolamine-phosphate (EtNP) from the second mannose of the GPI-anchor protein intermediate. Participates in the glycan remodeling steps of GPI-anchor maturation to allow an efficient transport of GPI-anchor proteins from the endoplasmic reticulum to the Golgi. The protein is Metallophosphoesterase 1 of Xenopus laevis (African clawed frog).